Consider the following 507-residue polypeptide: Maturase K (507 aa).

The protein belongs to the intron maturase 2 family. MatK subfamily.

The protein resides in the plastid. Its subcellular location is the chloroplast. Functionally, usually encoded in the trnK tRNA gene intron. Probably assists in splicing its own and other chloroplast group II introns. The polypeptide is Maturase K (Ranunculus repens (Creeping buttercup)).